The primary structure comprises 406 residues: Leu/Ile/Val-binding protein homolog 5 (406 aa).

The first 29 residues, 1–29 (MIGTRLPAWTRVLACGVAGLSLMTISAKA), serve as a signal peptide directing secretion.

This sequence belongs to the leucine-binding protein family.

Its function is as follows. Component of an amino-acid transport system. The chain is Leu/Ile/Val-binding protein homolog 5 from Brucella abortus (strain 2308).